A 312-amino-acid chain; its full sequence is 2,3-dihydroxyphenylpropionate/2,3-dihydroxicinnamic acid 1,2-dioxygenase (312 aa).

His-115 serves as the catalytic Proton donor. The active-site Proton acceptor is the His-179.

The protein belongs to the LigB/MhpB extradiol dioxygenase family. As to quaternary structure, homotetramer. Fe(2+) is required as a cofactor.

It catalyses the reaction 3-(2,3-dihydroxyphenyl)propanoate + O2 = (2Z,4E)-2-hydroxy-6-oxonona-2,4-dienedioate + H(+). The enzyme catalyses (2E)-3-(2,3-dihydroxyphenyl)prop-2-enoate + O2 = (2Z,4E,7E)-2-hydroxy-6-oxonona-2,4,7-trienedioate + H(+). The protein operates within aromatic compound metabolism; 3-phenylpropanoate degradation. Its function is as follows. Catalyzes the non-heme iron(II)-dependent oxidative cleavage of 2,3-dihydroxyphenylpropionic acid and 2,3-dihydroxicinnamic acid into 2-hydroxy-6-ketononadienedioate and 2-hydroxy-6-ketononatrienedioate, respectively. In Mycolicibacterium paratuberculosis (strain ATCC BAA-968 / K-10) (Mycobacterium paratuberculosis), this protein is 2,3-dihydroxyphenylpropionate/2,3-dihydroxicinnamic acid 1,2-dioxygenase.